The sequence spans 264 residues: Thiazole synthase (264 aa).

K106 serves as the catalytic Schiff-base intermediate with DXP. 1-deoxy-D-xylulose 5-phosphate-binding positions include G167, 193 to 194 (AG), and 215 to 216 (NT).

This sequence belongs to the ThiG family. As to quaternary structure, homotetramer. Forms heterodimers with either ThiH or ThiS.

The protein resides in the cytoplasm. The enzyme catalyses [ThiS sulfur-carrier protein]-C-terminal-Gly-aminoethanethioate + 2-iminoacetate + 1-deoxy-D-xylulose 5-phosphate = [ThiS sulfur-carrier protein]-C-terminal Gly-Gly + 2-[(2R,5Z)-2-carboxy-4-methylthiazol-5(2H)-ylidene]ethyl phosphate + 2 H2O + H(+). Its pathway is cofactor biosynthesis; thiamine diphosphate biosynthesis. Catalyzes the rearrangement of 1-deoxy-D-xylulose 5-phosphate (DXP) to produce the thiazole phosphate moiety of thiamine. Sulfur is provided by the thiocarboxylate moiety of the carrier protein ThiS. In vitro, sulfur can be provided by H(2)S. This Xylella fastidiosa (strain Temecula1 / ATCC 700964) protein is Thiazole synthase.